We begin with the raw amino-acid sequence, 111 residues long: Small ribosomal subunit protein bS6 (111 aa).

It belongs to the bacterial ribosomal protein bS6 family.

Functionally, binds together with bS18 to 16S ribosomal RNA. The protein is Small ribosomal subunit protein bS6 of Francisella tularensis subsp. tularensis (strain FSC 198).